Here is a 319-residue protein sequence, read N- to C-terminus: MKPENKLPVLDLISAEMKTVVNTLQPDLPPWPATGTIAEQRQYYTLERRFWNAGAPEMATKAYMVPTKYGQVETRLFCPQPDSPATLFYLHGGGFILGNLDTHDRIMRLLASYSQCTVIGIDYTLSPEARFPQVIEEIVAACCYFHQQAEDYQINMSRIGFAGDSAGAMLALASALWLRDKQIDCGKVAGVLLWYGLYGLRDSVTRRLLGGVWDGLTQQDLQMYEEAYLSNDADRESPYYCLFNNDLTREVPPCFIAGAEFDPLLDDSRLLYQTLAAHQQPCEFKLYPGTLHAFLHYSRMMKTADEALRDGAQFFTAQL.

Residues His91–Gly93 carry the Involved in the stabilization of the negatively charged intermediate by the formation of the oxyanion hole motif. Residues Ser165, Asp262, and His292 contribute to the active site.

It belongs to the 'GDXG' lipolytic enzyme family. Homodimer. Interacts with MalT and MelA.

The protein resides in the cytoplasm. Its function is as follows. Displays esterase activity towards short chain fatty esters (acyl chain length of up to 8 carbons). Able to hydrolyze triacetylglycerol (triacetin) and tributyrylglycerol (tributyrin), but not trioleylglycerol (triolein) or cholesterol oleate. Negatively regulates MalT activity by antagonizing maltotriose binding. Inhibits MelA galactosidase activity. The protein is Acetyl esterase of Escherichia coli O157:H7.